The following is a 162-amino-acid chain: NADH-quinone oxidoreductase subunit I (162 aa).

2 4Fe-4S ferredoxin-type domains span residues 53 to 83 (LRRY…IESD) and 93 to 122 (TRYD…ETHI). Residues Cys-63, Cys-66, Cys-69, Cys-73, Cys-102, Cys-105, Cys-108, and Cys-112 each contribute to the [4Fe-4S] cluster site.

Belongs to the complex I 23 kDa subunit family. In terms of assembly, NDH-1 is composed of 14 different subunits. Subunits NuoA, H, J, K, L, M, N constitute the membrane sector of the complex. [4Fe-4S] cluster is required as a cofactor.

The protein resides in the cell inner membrane. It carries out the reaction a quinone + NADH + 5 H(+)(in) = a quinol + NAD(+) + 4 H(+)(out). NDH-1 shuttles electrons from NADH, via FMN and iron-sulfur (Fe-S) centers, to quinones in the respiratory chain. The immediate electron acceptor for the enzyme in this species is believed to be ubiquinone. Couples the redox reaction to proton translocation (for every two electrons transferred, four hydrogen ions are translocated across the cytoplasmic membrane), and thus conserves the redox energy in a proton gradient. This chain is NADH-quinone oxidoreductase subunit I, found in Bordetella avium (strain 197N).